The primary structure comprises 272 residues: Magnetosome protein MamQ 1 (272 aa).

Topologically, residues 1–46 (MALGDANVGSAPGVDFSALQRVKQSEELLAQLYVVEETPRRLGRGP) are cytoplasmic. The chain crosses the membrane as a helical span at residues 47–67 (VHALMVISVLSVVAFIATLLM). Topologically, residues 68 to 272 (RYNTFVTMSE…PLNHAQDIKK (205 aa)) are lumenal.

It belongs to the LemA family.

The protein localises to the magnetosome membrane. Functionally, essential for magnetosome formation. Can be used to induce magnetosome formation. In Paramagnetospirillum magneticum (strain ATCC 700264 / AMB-1) (Magnetospirillum magneticum), this protein is Magnetosome protein MamQ 1 (mamQ1).